The sequence spans 441 residues: Endothelin receptor type B (441 aa).

Residues 1–26 form the signal peptide; that stretch reads MQPPPSLCGLALLALVLACGMAEVWG. Residues 27 to 100 are Extracellular-facing; sequence EEREMPSAPA…RPTEIKDTFK (74 aa). The segment at 30 to 90 is disordered; it reads EMPSAPATPP…APRRTPPPCQ (61 aa). Over residues 47–65 the composition is skewed to polar residues; sequence LTPSTKTSWPRDSNASLPR. An N-linked (GlcNAc...) asparagine glycan is attached at Asn-60. The chain crosses the membrane as a helical span at residues 101–125; that stretch reads YINTVVSCLVFVLGIIGNSTLLRII. Over 126 to 136 the chain is Cytoplasmic; the sequence is YKNKCMRNGPN. Residues 137 to 162 traverse the membrane as a helical segment; it reads ILIASLALGDLLHIIIDIPINVYKLL. Over 163 to 174 the chain is Extracellular; it reads AEDWPFGAEMCK. Cysteines 173 and 254 form a disulfide. Residues 175–196 traverse the membrane as a helical segment; that stretch reads LVPFIQKASVGITVLSLCALSI. Residues 197-217 lie on the Cytoplasmic side of the membrane; the sequence is DRYRAVASWSRIKGIGVPKWT. The chain crosses the membrane as a helical span at residues 218-242; that stretch reads AVEIVLIWVVSVILAVPEAIGFNLV. At 243 to 270 the chain is on the extracellular side; it reads TIDYKGSYLRICLLNPTQKTAFMQFYKT. The helical transmembrane segment at 271-295 threads the bilayer; the sequence is AKDWWLFSFYFCLPLAITAFFYTLM. Residues 296–323 lie on the Cytoplasmic side of the membrane; that stretch reads TCEMLRKKSGMQIALNDHLKQRREVAKT. Ser-304 is modified (phosphoserine). Residues 324–349 traverse the membrane as a helical segment; it reads VFCLVLVFGLCWLALHLSRILKLTLY. Topologically, residues 350-361 are extracellular; the sequence is DQNDPNRCELLS. Residues 362-388 traverse the membrane as a helical segment; the sequence is FLLVLDYIGINMASLNSCINPIALYLV. The Cytoplasmic portion of the chain corresponds to 389–441; sequence SKRFKNCFKSCLCCWCQSFEEKQSLEEKQSCLKFKANDHGYDNFRSSNKYSSS. S-palmitoyl cysteine attachment occurs at residues Cys-402 and Cys-404. A Phosphoserine modification is found at Ser-418. A Phosphotyrosine modification is found at Tyr-438. A phosphoserine mark is found at Ser-439, Ser-440, and Ser-441.

Belongs to the G-protein coupled receptor 1 family. Endothelin receptor subfamily. EDNRB sub-subfamily.

It localises to the cell membrane. Its function is as follows. Non-specific receptor for endothelin 1, 2, and 3. Mediates its action by association with G proteins that activate a phosphatidylinositol-calcium second messenger system. The protein is Endothelin receptor type B (EDNRB) of Oryctolagus cuniculus (Rabbit).